The sequence spans 390 residues: UPF0229 protein OB2647 (390 aa).

Residues 99-121 form a disordered region; it reads NASQQGQQGQGNGKKAGDQPGTD.

It belongs to the UPF0229 family.

This Oceanobacillus iheyensis (strain DSM 14371 / CIP 107618 / JCM 11309 / KCTC 3954 / HTE831) protein is UPF0229 protein OB2647.